Reading from the N-terminus, the 307-residue chain is MNAPTSVTVRVPAKVNLRLAVGPVRGDGYHGLVNVFHAVSLYDEVTVSPRSDLAPGQAVLSVDGERPDHVARVPLDDSNLAARAAALLARHVPHATGVHIHVHKAIPVAGGMAGGSADAAAALVACDALWEGGTPRERLLELAAELGSDVAFPLIGCTAVGTGRGEQLSPLPVQGTFHWVFALVDGGLSTTKVFAEYDRLRPDAPEPTLDDALVAALAAGDARRLGAALTNDLQPAALALRPELGDLLEAGRAAGALGALVSGSGPTCAFLAESADHARELAAALRASGTCADTVTAHGPVPGATVV.

Lys14 is an active-site residue. 107 to 117 provides a ligand contact to ATP; the sequence is PVAGGMAGGSA. Asp149 is a catalytic residue.

It belongs to the GHMP kinase family. IspE subfamily.

The enzyme catalyses 4-CDP-2-C-methyl-D-erythritol + ATP = 4-CDP-2-C-methyl-D-erythritol 2-phosphate + ADP + H(+). Its pathway is isoprenoid biosynthesis; isopentenyl diphosphate biosynthesis via DXP pathway; isopentenyl diphosphate from 1-deoxy-D-xylulose 5-phosphate: step 3/6. In terms of biological role, catalyzes the phosphorylation of the position 2 hydroxy group of 4-diphosphocytidyl-2C-methyl-D-erythritol. This is 4-diphosphocytidyl-2-C-methyl-D-erythritol kinase from Thermobifida fusca (strain YX).